The sequence spans 604 residues: Procollagen galactosyltransferase 1 (604 aa).

A signal peptide spans 1 to 18 (MHLLCFFFLLLWTGPARS). Residues Asn-78, Asn-166, Asn-363, and Asn-561 are each glycosylated (N-linked (GlcNAc...) asparagine). Basic and acidic residues predominate over residues 570 to 580 (RARSRKSREQE). The interval 570–604 (RARSRKSREQEELSSEAQNTDVLQSPLDSTARDEL) is disordered. Residues 584-597 (SEAQNTDVLQSPLD) are compositionally biased toward polar residues. A Prevents secretion from ER motif is present at residues 601–604 (RDEL).

It belongs to the glycosyltransferase 25 family.

It localises to the endoplasmic reticulum lumen. It carries out the reaction (5R)-5-hydroxy-L-lysyl-[collagen] + UDP-alpha-D-galactose = (5R)-5-O-(beta-D-galactosyl)-5-hydroxy-L-lysyl-[collagen] + UDP + H(+). Beta-galactosyltransferase that transfers beta-galactose to hydroxylysine residues of type I collagen. By acting on collagen glycosylation, facilitates the formation of collagen triple helix. The chain is Procollagen galactosyltransferase 1 (colgalt1) from Danio rerio (Zebrafish).